The following is a 358-amino-acid chain: Gap junction alpha-5 protein (358 aa).

The Cytoplasmic portion of the chain corresponds to 1-19 (MGDWSFLGEFLEEVHKHST). The chain crosses the membrane as a helical span at residues 20-40 (VIGKVWLTVLFIFRMLVLGTA). At 41 to 76 (AESSWGDEQADFRCDTIQPGCQNVCYDQAFPISHIR) the chain is on the extracellular side. The chain crosses the membrane as a helical span at residues 77 to 97 (YWVLQIIFVSTPSLVYMGHAM). Over 98–164 (HTVRMQEKQK…CTILIRTTME (67 aa)) the chain is Cytoplasmic. A helical transmembrane segment spans residues 165 to 185 (VAFIVGQYLLYGIFLDTLHVC). Residues 186–205 (RRSPCPHPVNCYVSRPTEKN) are Extracellular-facing. Residues 206–226 (VFIVFMMAVAGLSLFLSLAEL) form a helical membrane-spanning segment. At 227–358 (YHLGWKKIRQ…SKARSDDLSV (132 aa)) the chain is on the cytoplasmic side. 2 disordered regions span residues 242 to 262 (RQGV…QSLT) and 318 to 358 (SQKP…DLSV). 2 positions are modified to phosphoserine: serine 353 and serine 357.

It belongs to the connexin family. Alpha-type (group II) subfamily. A connexon is composed of a hexamer of connexins. Abundantly expressed in the lung, also expressed in the kidney and heart.

The protein resides in the cell membrane. Its subcellular location is the cell junction. The protein localises to the gap junction. Its function is as follows. One gap junction consists of a cluster of closely packed pairs of transmembrane channels, the connexons, through which materials of low MW diffuse from one cell to a neighboring cell. The protein is Gap junction alpha-5 protein (Gja5) of Mus musculus (Mouse).